Consider the following 207-residue polypeptide: Urease accessory protein UreG (207 aa).

16–23 (GPVGSGKT) serves as a coordination point for GTP.

The protein belongs to the SIMIBI class G3E GTPase family. UreG subfamily. As to quaternary structure, homodimer. UreD, UreF and UreG form a complex that acts as a GTP-hydrolysis-dependent molecular chaperone, activating the urease apoprotein by helping to assemble the nickel containing metallocenter of UreC. The UreE protein probably delivers the nickel.

The protein localises to the cytoplasm. Functionally, facilitates the functional incorporation of the urease nickel metallocenter. This process requires GTP hydrolysis, probably effectuated by UreG. This chain is Urease accessory protein UreG, found in Blochmanniella pennsylvanica (strain BPEN).